We begin with the raw amino-acid sequence, 376 residues long: 1-acyl-sn-glycerol-3-phosphate acyltransferase gamma (376 aa).

At 1 to 124 the chain is on the cytoplasmic side; sequence MGLLAYLKTQ…LGSSKVLAKR (124 aa). The HXXXXD motif signature appears at 96–101; sequence HNFEID. A helical membrane pass occupies residues 125-145; the sequence is ELLCVPLIGWTWYFLEIVFCK. Over 146 to 316 the chain is Lumenal; sequence RKWEEDRDTV…TLLNFLCWAT (171 aa). The chain crosses the membrane as a helical span at residues 317-339; it reads ILLSPLFSFVLGVFASGSPLLIL. Residues 340–376 lie on the Cytoplasmic side of the membrane; that stretch reads TFLGFVGAASFGVRRLIGVTEIEKGSSYGNQELKKKE.

It belongs to the 1-acyl-sn-glycerol-3-phosphate acyltransferase family. In terms of tissue distribution, widely expressed. Mainly expressed in testis, kidney and liver (at protein level).

It localises to the endoplasmic reticulum membrane. The protein resides in the nucleus envelope. The enzyme catalyses a 1-acyl-sn-glycero-3-phosphate + an acyl-CoA = a 1,2-diacyl-sn-glycero-3-phosphate + CoA. It carries out the reaction pentadecanoyl-CoA + 1-(9Z-octadecenoyl)-sn-glycero-3-phosphate = 1-(9Z)-octadecenoyl-2-pentadecanoyl-sn-glycero-3-phosphate + CoA. The catalysed reaction is heptadecanoyl-CoA + 1-(9Z-octadecenoyl)-sn-glycero-3-phosphate = 1-(9Z)-octadecenoyl-2-heptadecanoyl-sn-glycero-3-phosphate + CoA. It catalyses the reaction 1-(9Z-octadecenoyl)-sn-glycero-3-phosphate + octadecanoyl-CoA = 1-(9Z-octadecenoyl)-2-octadecanoyl-sn-glycero-3-phosphate + CoA. The enzyme catalyses nonadecanoyl-CoA + 1-(9Z-octadecenoyl)-sn-glycero-3-phosphate = 1-(9Z)-octadecenoyl-2-nonadecanoyl-sn-glycero-3-phosphate + CoA. It carries out the reaction 1-(9Z-octadecenoyl)-sn-glycero-3-phosphate + (5Z,8Z,11Z,14Z)-eicosatetraenoyl-CoA = 1-(9Z)-octadecenoyl-2-(5Z,8Z,11Z,14Z)-eicosatetraenoyl-sn-glycero-3-phosphate + CoA. The catalysed reaction is 1-(9Z-octadecenoyl)-sn-glycero-3-phosphate + (9Z)-octadecenoyl-CoA = 1,2-di-(9Z-octadecenoyl)-sn-glycero-3-phosphate + CoA. It catalyses the reaction 1-(9Z-octadecenoyl)-sn-glycero-3-phosphate + (9Z,12Z)-octadecadienoyl-CoA = 1-(9Z)-octadecenoyl-2-(9Z,12Z)-octadecadienoyl-sn-glycero-3-phosphate + CoA. The enzyme catalyses 1-(9Z-octadecenoyl)-sn-glycero-3-phosphocholine + (5Z,8Z,11Z,14Z)-eicosatetraenoyl-CoA = 1-(9Z)-octadecenoyl-2-(5Z,8Z,11Z,14Z)-icosatetraenoyl-sn-glycero-3-phosphocholine + CoA. It carries out the reaction 1-(9Z-octadecenoyl)-sn-glycero-3-phospho-(1D-myo-inositol) + (5Z,8Z,11Z,14Z)-eicosatetraenoyl-CoA = 1-(9Z-octadecenoyl)-2-(5Z,8Z,11Z,14Z-eicosatetraenoyl)-sn-glycero-3-phospho-1D-myo-inositol + CoA. The catalysed reaction is 1-(9Z-octadecenoyl)-sn-glycero-3-phospho-L-serine + (5Z,8Z,11Z,14Z)-eicosatetraenoyl-CoA = 1-(9Z-octadecenoyl)-2-(5Z,8Z,11Z,14Z-eicosatetraenoyl)-sn-glycero-3-phospho-L-serine + CoA. It catalyses the reaction 1-hexadecanoyl-sn-glycero-3-phosphate + (9Z)-octadecenoyl-CoA = 1-hexadecanoyl-2-(9Z-octadecenoyl)-sn-glycero-3-phosphate + CoA. The enzyme catalyses 1-hexadecanoyl-sn-glycero-3-phosphate + (5Z,8Z,11Z,14Z)-eicosatetraenoyl-CoA = 1-hexadecanoyl-2-(5Z,8Z,11Z,14Z-eicosatetraenoyl)-sn-glycero-3-phosphate + CoA. It carries out the reaction 1-heptadecanoyl-sn-glycero-3-phosphate + (5Z,8Z,11Z,14Z)-eicosatetraenoyl-CoA = 1-heptadecanoyl-2-(5Z,8Z,11Z,14Z)-eicosatetraenoyl-sn-glycero-3-phosphate + CoA. The catalysed reaction is 1-octadecanoyl-sn-glycero-3-phosphate + (9Z)-octadecenoyl-CoA = 1-octadecanoyl-2-(9Z-octadecenoyl)-sn-glycero-3-phosphate + CoA. It catalyses the reaction 1-octadecanoyl-sn-glycero-3-phosphate + (5Z,8Z,11Z,14Z)-eicosatetraenoyl-CoA = 1-octadecanoyl-2-(5Z,8Z,11Z,14Z-eicosatetraenoyl)-sn-glycero-3-phosphate + CoA. The enzyme catalyses 1-(9Z-octadecenoyl)-sn-glycero-3-phosphate + hexadecanoyl-CoA = 1-hexadecanoyl-2-(9Z-octadecenoyl)-sn-glycero-3-phosphate + CoA. It carries out the reaction 1-O-(9Z-octadecenyl)-sn-glycero-3-phosphate + (5Z,8Z,11Z,14Z)-eicosatetraenoyl-CoA = 1-O-(9Z-octadecenyl)-2-(5Z,8Z,11Z,14Z-eicosatetraenoyl)-sn-glycero-3-phosphate + CoA. The catalysed reaction is a 1-acyl-sn-glycero-3-phospho-(1D-myo-inositol) + (5Z,8Z,11Z,14Z)-eicosatetraenoyl-CoA = a 1-acyl-2-(5Z,8Z,11Z,14Z-eicosatetraenoyl)-sn-glycero-3-phospho-(1D-myo-inositol) + CoA. Its pathway is phospholipid metabolism; CDP-diacylglycerol biosynthesis; CDP-diacylglycerol from sn-glycerol 3-phosphate: step 2/3. In males, activity increases in an age-dependent fashion, maybe derived from the induction by sex-hormones. Converts 1-acyl-sn-glycerol-3-phosphate (lysophosphatidic acid or LPA) into 1,2-diacyl-sn-glycerol-3-phosphate (phosphatidic acid or PA) by incorporating an acyl moiety at the sn-2 position of the glycerol backbone. Acts on LPA containing saturated or unsaturated fatty acids C16:0-C20:4 at the sn-1 position using C18:1, C20:4 or C18:2-CoA as the acyl donor. Also acts on lysophosphatidylcholine, lysophosphatidylinositol and lysophosphatidylserine using C18:1 or C20:4-CoA. Has a preference for arachidonoyl-CoA as a donor. Also has a modest lysophosphatidylinositol acyltransferase (LPIAT) activity, converts lysophosphatidylinositol (LPI) into phosphatidylinositol. The protein is 1-acyl-sn-glycerol-3-phosphate acyltransferase gamma of Mus musculus (Mouse).